A 442-amino-acid chain; its full sequence is D-aminoacyl-tRNA deacylase (442 aa).

The protein belongs to the DtdA deacylase family. In terms of assembly, monomer. The cofactor is Zn(2+).

It catalyses the reaction a D-aminoacyl-tRNA + H2O = a tRNA + a D-alpha-amino acid + H(+). It carries out the reaction glycyl-tRNA(Ala) + H2O = tRNA(Ala) + glycine + H(+). Its function is as follows. D-aminoacyl-tRNA deacylase with broad substrate specificity. By recycling D-aminoacyl-tRNA to D-amino acids and free tRNA molecules, this enzyme counteracts the toxicity associated with the formation of D-aminoacyl-tRNA entities in vivo. The chain is D-aminoacyl-tRNA deacylase from Methanospirillum hungatei JF-1 (strain ATCC 27890 / DSM 864 / NBRC 100397 / JF-1).